Here is a 418-residue protein sequence, read N- to C-terminus: Lactate dehydrogenase (NAD(+),ferredoxin) subunit LctC (418 aa).

Residues Arg-285, 325-328 (IGLS), 343-348 (SGAVQF), Asn-362, and 380-381 (DL) each bind FAD.

The protein belongs to the ETF alpha-subunit/FixB family. In terms of assembly, part of the stable heterotrimeric lactate dehydrogenase-Etf complex, which is formed by the lactate dehydrogenase LctD and the electron-transferring flavoprotein (Etf) alpha (LctC) and beta (LctB) subunits. It depends on FAD as a cofactor. [4Fe-4S] cluster is required as a cofactor.

It is found in the cytoplasm. The enzyme catalyses lactate + 2 reduced [2Fe-2S]-[ferredoxin] + 2 NAD(+) = 2 oxidized [2Fe-2S]-[ferredoxin] + pyruvate + 2 NADH. Activity is stimulated by divalent cations. Highest stimulation is observed with Ca(2+). In terms of biological role, the lactate dehydrogenase-Etf complex catalyzes the oxidation of lactate to pyruvate. It uses flavin-based electron confurcation to drive endergonic lactate oxidation with NAD(+) as oxidant at the expense of simultaneous exergonic electron flow from reduced ferredoxin to NAD(+). The electron transfer flavoprotein (Etf) mediates the electron transfer between the different donors and acceptors. The polypeptide is Lactate dehydrogenase (NAD(+),ferredoxin) subunit LctC (Acetobacterium woodii (strain ATCC 29683 / DSM 1030 / JCM 2381 / KCTC 1655 / WB1)).